The following is a 126-amino-acid chain: Large ribosomal subunit protein bL12 (126 aa).

Belongs to the bacterial ribosomal protein bL12 family. In terms of assembly, homodimer. Part of the ribosomal stalk of the 50S ribosomal subunit. Forms a multimeric L10(L12)X complex, where L10 forms an elongated spine to which 2 to 4 L12 dimers bind in a sequential fashion. Binds GTP-bound translation factors.

In terms of biological role, forms part of the ribosomal stalk which helps the ribosome interact with GTP-bound translation factors. Is thus essential for accurate translation. This is Large ribosomal subunit protein bL12 from Acidovorax ebreus (strain TPSY) (Diaphorobacter sp. (strain TPSY)).